The following is a 125-amino-acid chain: Small ribosomal subunit protein uS17 (125 aa).

Disordered stretches follow at residues 1 to 21 (MSSSPAQRHTRKTQIGFVSSR) and 101 to 125 (VAAQVPTKTTASNTPAPAEQPAPQA).

It belongs to the universal ribosomal protein uS17 family. As to quaternary structure, part of the 30S ribosomal subunit.

Its function is as follows. One of the primary rRNA binding proteins, it binds specifically to the 5'-end of 16S ribosomal RNA. The protein is Small ribosomal subunit protein uS17 of Opitutus terrae (strain DSM 11246 / JCM 15787 / PB90-1).